The following is a 309-amino-acid chain: Homoserine kinase (309 aa).

ATP is bound at residue 91–101 (PVGSGLGSSAC).

This sequence belongs to the GHMP kinase family. Homoserine kinase subfamily.

It localises to the cytoplasm. It carries out the reaction L-homoserine + ATP = O-phospho-L-homoserine + ADP + H(+). It participates in amino-acid biosynthesis; L-threonine biosynthesis; L-threonine from L-aspartate: step 4/5. Functionally, catalyzes the ATP-dependent phosphorylation of L-homoserine to L-homoserine phosphate. This is Homoserine kinase from Hamiltonella defensa subsp. Acyrthosiphon pisum (strain 5AT).